Consider the following 295-residue polypeptide: Signal-transducing adaptor protein 1 (295 aa).

Residues 25–121 form the PH domain; it reads PLYFEGFLLI…WRGFILTVTE (97 aa). Residue tyrosine 168 is modified to Phosphotyrosine. Residues 177 to 280 form the SH2 domain; that stretch reads ACFYTVSRKE…TDENTGQEPS (104 aa). The disordered stretch occupies residues 270-295; it reads STDENTGQEPSMEGRSEKLKKNPHIA.

As to quaternary structure, interacts with KIT and CSF1R. Interacts with URI1; the interaction is phosphorylation-dependent and occurs in a growth-dependent manner. Post-translationally, phosphorylated on tyrosine by TEC. Phosphorylated on tyrosine by KIT.

The protein localises to the nucleus. It is found in the cytoplasm. It localises to the mitochondrion. In terms of biological role, in BCR signaling, appears to function as a docking protein acting downstream of TEC and participates in a positive feedback loop by increasing the activity of TEC. The sequence is that of Signal-transducing adaptor protein 1 (STAP1) from Homo sapiens (Human).